Reading from the N-terminus, the 80-residue chain is Trefoil factor 3 (80 aa).

The N-terminal stretch at 1–21 (MAARALCMLGLVLALLSSSSA) is a signal peptide. The P-type domain occupies 30–73 (NQCAVPAKDRVDCGYPHVTPKECNNRGCCFDSRIPGVPWCFKPL). 3 disulfides stabilise this stretch: cysteine 32-cysteine 58, cysteine 42-cysteine 57, and cysteine 52-cysteine 69.

As to quaternary structure, monomer. Homodimer; disulfide-linked. In terms of tissue distribution, expressed in goblet cells of the intestines and colon (at protein level). Expressed by goblet cells of small and large intestinal epithelia and also by the uterus. Also expressed in the hypothalamus where it is detected in paraventricular, periventricular and supraoptic nuclei (at protein level).

It is found in the secreted. The protein localises to the extracellular space. The protein resides in the extracellular matrix. Its subcellular location is the cytoplasm. Involved in the maintenance and repair of the intestinal mucosa. Promotes the mobility of epithelial cells in healing processes (motogen). In Homo sapiens (Human), this protein is Trefoil factor 3 (TFF3).